A 319-amino-acid polypeptide reads, in one-letter code: ATP-dependent 6-phosphofructokinase (319 aa).

Residue Gly11 participates in ATP binding. 21 to 25 (RAVVR) contacts ADP. Residues 72-73 (RC) and 102-105 (GDGS) contribute to the ATP site. Asp103 is a binding site for Mg(2+). 125–127 (TID) contacts substrate. The active-site Proton acceptor is Asp127. Arg154 contributes to the ADP binding site. Substrate is bound at residue 169-171 (MGR). Residues 185–187 (GAE), Arg211, and 213–215 (KKH) contribute to the ADP site. Residues Glu222, Arg243, and 249–252 (HIQR) contribute to the substrate site.

This sequence belongs to the phosphofructokinase type A (PFKA) family. ATP-dependent PFK group I subfamily. Prokaryotic clade 'B1' sub-subfamily. In terms of assembly, homotetramer. It depends on Mg(2+) as a cofactor.

The protein resides in the cytoplasm. The enzyme catalyses beta-D-fructose 6-phosphate + ATP = beta-D-fructose 1,6-bisphosphate + ADP + H(+). The protein operates within carbohydrate degradation; glycolysis; D-glyceraldehyde 3-phosphate and glycerone phosphate from D-glucose: step 3/4. With respect to regulation, allosterically activated by ADP and other diphosphonucleosides, and allosterically inhibited by phosphoenolpyruvate. Catalyzes the phosphorylation of D-fructose 6-phosphate to fructose 1,6-bisphosphate by ATP, the first committing step of glycolysis. This chain is ATP-dependent 6-phosphofructokinase, found in Lysinibacillus sphaericus (Bacillus sphaericus).